We begin with the raw amino-acid sequence, 616 residues long: Endonuclease 8-like 3 (616 aa).

An FPG-type zinc finger spans residues 271-305 (KVYKRPNCGQCGTKITVCRLGEHNRMTYFCPKCQK). The RanBP2-type zinc finger occupies 341 to 370 (KEEHWACAVCTLINKPSDKQCDACLTLRPE). Positions 491–524 (LKTGHTTSNTIHLSSTISSPQSKMTGDAAAKTGN) are disordered. Residues 494 to 514 (GHTTSNTIHLSSTISSPQSKM) show a composition bias toward polar residues. Zn(2+)-binding residues include Cys-527, His-530, Cys-553, Cys-561, Cys-574, His-576, Cys-599, and Cys-607. 2 consecutive GRF-type zinc fingers follow at residues 527 to 570 (CSAH…ADLH) and 574 to 616 (CNHG…AKTE).

It belongs to the FPG family.

The protein localises to the nucleus. It localises to the chromosome. The catalysed reaction is 2'-deoxyribonucleotide-(2'-deoxyribose 5'-phosphate)-2'-deoxyribonucleotide-DNA = a 3'-end 2'-deoxyribonucleotide-(2,3-dehydro-2,3-deoxyribose 5'-phosphate)-DNA + a 5'-end 5'-phospho-2'-deoxyribonucleoside-DNA + H(+). Functionally, DNA glycosylase which prefers single-stranded DNA (ssDNA), or partially ssDNA structures such as bubble and fork structures, to double-stranded DNA (dsDNA). Mediates interstrand cross-link repair in response to replication stress: recruited to replication stress sites via interaction with ubiquitinated CMG helicase and acts by mediating DNA glycosylase activity. Cleaves one of the two N-glycosyl bonds comprising the interstrand cross-link, which avoids the formation of a double-strand break but generates an abasic site that is bypassed by translesion synthesis polymerases. This is Endonuclease 8-like 3 from Xenopus laevis (African clawed frog).